A 429-amino-acid polypeptide reads, in one-letter code: E3 ubiquitin-protein ligase ZNRF4 (429 aa).

A signal peptide spans 1 to 27 (MLRCRPEPLMPRATRVAVAVSLPLSHA). The Lumenal segment spans residues 28 to 250 (VIPTQLPSHP…PPCRDLDCHP (223 aa)). A disordered region spans residues 30-64 (PTQLPSHPGHRPSGRPRRCPKAPCLPSPVGLSSTQ). The segment covering 37–49 (PGHRPSGRPRRCP) has biased composition (basic residues). N-linked (GlcNAc...) asparagine glycosylation occurs at Asn152. Residues 152 to 223 (NRSLGAIALI…VGEAASQDLR (72 aa)) form the PA domain. A helical transmembrane segment spans residues 251-271 (VLTVSWALGRTLALVVSTLFV). Topologically, residues 272 to 429 (LNRLWLWAQA…SPAPPEAPGQ (158 aa)) are cytoplasmic. The RING-type; atypical zinc finger occupies 309–352 (CAICLDEYEEGDQLKILPCSHTYHCKCIDPWFSQAPRRSCPVCK). 2 disordered regions span residues 358–381 (TEDS…GHRP) and 409–429 (TTSL…APGQ). Polar residues predominate over residues 409-420 (TTSLEAEDTTVS).

In terms of assembly, interacts with CANX.

The protein resides in the endoplasmic reticulum membrane. The catalysed reaction is S-ubiquitinyl-[E2 ubiquitin-conjugating enzyme]-L-cysteine + [acceptor protein]-L-lysine = [E2 ubiquitin-conjugating enzyme]-L-cysteine + N(6)-ubiquitinyl-[acceptor protein]-L-lysine.. The protein operates within protein modification; protein ubiquitination. E3 ubiquitin-protein ligase that acts as a negative regulator of NOD2 signaling by mediating ubiquitination and degradation of RIPK2. Also catalyzes ubiquitination and proteasomal degradation of CANX within the endoplasmic reticulum. Could have a role in spermatogenesis. The sequence is that of E3 ubiquitin-protein ligase ZNRF4 (ZNRF4) from Macaca fascicularis (Crab-eating macaque).